The chain runs to 157 residues: Cyclic pyranopterin monophosphate synthase (157 aa).

Substrate contacts are provided by residues 74–76 (MCH) and 112–113 (ME). Residue D127 is part of the active site.

It belongs to the MoaC family. In terms of assembly, homohexamer; trimer of dimers.

It catalyses the reaction (8S)-3',8-cyclo-7,8-dihydroguanosine 5'-triphosphate = cyclic pyranopterin phosphate + diphosphate. It functions in the pathway cofactor biosynthesis; molybdopterin biosynthesis. Its function is as follows. Catalyzes the conversion of (8S)-3',8-cyclo-7,8-dihydroguanosine 5'-triphosphate to cyclic pyranopterin monophosphate (cPMP). The protein is Cyclic pyranopterin monophosphate synthase of Campylobacter jejuni subsp. doylei (strain ATCC BAA-1458 / RM4099 / 269.97).